The chain runs to 232 residues: 2-C-methyl-D-erythritol 4-phosphate cytidylyltransferase (232 aa).

The protein belongs to the IspD/TarI cytidylyltransferase family. IspD subfamily.

It carries out the reaction 2-C-methyl-D-erythritol 4-phosphate + CTP + H(+) = 4-CDP-2-C-methyl-D-erythritol + diphosphate. Its pathway is isoprenoid biosynthesis; isopentenyl diphosphate biosynthesis via DXP pathway; isopentenyl diphosphate from 1-deoxy-D-xylulose 5-phosphate: step 2/6. Its function is as follows. Catalyzes the formation of 4-diphosphocytidyl-2-C-methyl-D-erythritol from CTP and 2-C-methyl-D-erythritol 4-phosphate (MEP). The protein is 2-C-methyl-D-erythritol 4-phosphate cytidylyltransferase of Stenotrophomonas maltophilia (strain R551-3).